A 333-amino-acid polypeptide reads, in one-letter code: Ketol-acid reductoisomerase (NADP(+)) (333 aa).

Positions 2–182 constitute a KARI N-terminal Rossmann domain; the sequence is AKMYYDSDAS…GCTRAGVLET (181 aa). Residues 25–28, R48, S51, and 83–86 each bind NADP(+); these read YGSQ and DERQ. Residue H108 is part of the active site. G134 lines the NADP(+) pocket. The region spanning 183-328 is the KARI C-terminal knotted domain; sequence TFKEETETDL…AELRAMMPFI (146 aa). The Mg(2+) site is built by D191, E195, E227, and E231. S252 contributes to the substrate binding site.

It belongs to the ketol-acid reductoisomerase family. Mg(2+) serves as cofactor.

The enzyme catalyses (2R)-2,3-dihydroxy-3-methylbutanoate + NADP(+) = (2S)-2-acetolactate + NADPH + H(+). It catalyses the reaction (2R,3R)-2,3-dihydroxy-3-methylpentanoate + NADP(+) = (S)-2-ethyl-2-hydroxy-3-oxobutanoate + NADPH + H(+). The protein operates within amino-acid biosynthesis; L-isoleucine biosynthesis; L-isoleucine from 2-oxobutanoate: step 2/4. Its pathway is amino-acid biosynthesis; L-valine biosynthesis; L-valine from pyruvate: step 2/4. Its function is as follows. Involved in the biosynthesis of branched-chain amino acids (BCAA). Catalyzes an alkyl-migration followed by a ketol-acid reduction of (S)-2-acetolactate (S2AL) to yield (R)-2,3-dihydroxy-isovalerate. In the isomerase reaction, S2AL is rearranged via a Mg-dependent methyl migration to produce 3-hydroxy-3-methyl-2-ketobutyrate (HMKB). In the reductase reaction, this 2-ketoacid undergoes a metal-dependent reduction by NADPH to yield (R)-2,3-dihydroxy-isovalerate. This chain is Ketol-acid reductoisomerase (NADP(+)), found in Desulfitobacterium hafniense (strain DSM 10664 / DCB-2).